A 720-amino-acid polypeptide reads, in one-letter code: Translation initiation factor IF-2 (720 aa).

Residues 48–138 form a disordered region; the sequence is KKFKASQAKD…NEVEETKEMP (91 aa). Composition is skewed to low complexity over residues 60–75 and 99–113; these read KQNTQNNHQKSNNKQN and KGKQQNKNNKTNKNQ. The span at 114–123 shows a compositional bias: basic residues; that stretch reads KNNKNKKNNK. In terms of domain architecture, tr-type G spans 222–391; sequence ERPAVVTIMG…GLVAEVQELK (170 aa). The segment at 231–238 is G1; that stretch reads GHVDHGKT. 231–238 provides a ligand contact to GTP; sequence GHVDHGKT. The interval 256–260 is G2; that stretch reads GITQH. The interval 277–280 is G3; the sequence is DTPG. GTP contacts are provided by residues 277 to 281 and 331 to 334; these read DTPGH and NKID. The G4 stretch occupies residues 331–334; it reads NKID. The tract at residues 367 to 369 is G5; it reads SAL.

It belongs to the TRAFAC class translation factor GTPase superfamily. Classic translation factor GTPase family. IF-2 subfamily.

It localises to the cytoplasm. Functionally, one of the essential components for the initiation of protein synthesis. Protects formylmethionyl-tRNA from spontaneous hydrolysis and promotes its binding to the 30S ribosomal subunits. Also involved in the hydrolysis of GTP during the formation of the 70S ribosomal complex. This chain is Translation initiation factor IF-2, found in Staphylococcus epidermidis (strain ATCC 35984 / DSM 28319 / BCRC 17069 / CCUG 31568 / BM 3577 / RP62A).